Reading from the N-terminus, the 76-residue chain is UPF0154 protein Sca_0984 (76 aa).

Residues 4–24 traverse the membrane as a helical segment; sequence WLAILLIVAALIIGLVGGFFL.

This sequence belongs to the UPF0154 family.

The protein resides in the cell membrane. This Staphylococcus carnosus (strain TM300) protein is UPF0154 protein Sca_0984.